Consider the following 82-residue polypeptide: Small ribosomal subunit protein bS20 (82 aa).

It belongs to the bacterial ribosomal protein bS20 family.

Binds directly to 16S ribosomal RNA. This Streptococcus pyogenes serotype M12 (strain MGAS2096) protein is Small ribosomal subunit protein bS20.